The chain runs to 360 residues: 45 kDa calcium-binding protein (360 aa).

Residues 1–29 form the signal peptide; the sequence is MVSKQAFLFSLGSLYLSLLFIFLLMDVYA. A glycan (N-linked (GlcNAc...) asparagine) is linked at N33. EF-hand domains are found at residues 96 to 131, 135 to 170, 231 to 266, 276 to 311, and 312 to 347; these read RNRR…KTEE, EAVN…SKGF, MLKF…TVEN, WVRD…MNEY, and NALN…FTGS. Residues D109, N111, D113, Q115, E120, D148, D150, D152, H154, E159, D244, D246, D248, K250, E255, D289, N291, D293, E300, D325, N327, D329, and E336 each contribute to the Ca(2+) site.

Belongs to the CREC family.

Its subcellular location is the golgi apparatus lumen. Functionally, may regulate calcium-dependent activities in the endoplasmic reticulum lumen or post-ER compartment. The polypeptide is 45 kDa calcium-binding protein (sdf4) (Xenopus laevis (African clawed frog)).